Reading from the N-terminus, the 544-residue chain is Lariat debranching enzyme (544 aa).

Positions 8, 10, 39, and 84 each coordinate a divalent metal cation. Positions 124-154 are lariat recognition loop; that stretch reads SGIFKSHDYRKGHFECPPYNSSTIRSIYHVR. K128 bears the N6-acetyllysine mark. Positions 174, 226, and 228 each coordinate a divalent metal cation. The segment covering 395 to 412 has biased composition (acidic residues); sequence EYEEQDDVESNDSGEDQS. Positions 395 to 463 are disordered; that stretch reads EYEEQDDVES…PSDQASEFSA (69 aa). Polar residues predominate over residues 413 to 425; sequence EYNTDTSALSSIN. Positions 429–439 are enriched in acidic residues; that stretch reads IMLDEEEDEDS. Residues 445–463 show a composition bias toward polar residues; that stretch reads SGMNTPSVEPSDQASEFSA. Phosphoserine is present on residues S464, S474, S478, S479, S485, S499, and S514. The tract at residues 476–544 is disordered; the sequence is IVSSDDTVDS…AVDDDDDDAA (69 aa). The span at 512 to 522 shows a compositional bias: basic and acidic residues; sequence RLSDEHEPEQR.

It belongs to the lariat debranching enzyme family. The cofactor is Fe(2+). It depends on Zn(2+) as a cofactor. Requires Mn(2+) as cofactor. In terms of tissue distribution, ubiquitously expressed, strongest expression in the spinal cord and brainstem.

The protein resides in the nucleus. Active in presence of diverse metals including Fe(2+), Zn(2+), Mn(2+). Also activated by Ca(2+). Binds two metal cations in two adjacent alpha and beta metal-binding pockets. In terms of biological role, cleaves the 2'-5' phosphodiester linkage at the branch point of excised lariat intron RNA and converts them into linear molecules that can be subsequently degraded, thereby facilitating ribonucleotide turnover. Linked to its role in pre-mRNA processing mechanism, may also participate in retrovirus replication via an RNA lariat intermediate in cDNA synthesis and have an antiviral cell-intrinsic defense function in the brainstem. The polypeptide is Lariat debranching enzyme (DBR1) (Homo sapiens (Human)).